Here is a 492-residue protein sequence, read N- to C-terminus: Catalase (492 aa).

Residues histidine 65 and asparagine 138 contribute to the active site. A heme-binding site is contributed by tyrosine 348.

This sequence belongs to the catalase family. In terms of assembly, homotetramer. Heme serves as cofactor.

The protein localises to the cytoplasm. Its subcellular location is the cytosol. It localises to the peroxisome matrix. It carries out the reaction 2 H2O2 = O2 + 2 H2O. Its function is as follows. Catalyzes the degradation of hydrogen peroxide (H(2)O(2)) generated by peroxisomal oxidases to water and oxygen, thereby protecting cells from the toxic effects of hydrogen peroxide. In Triticum aestivum (Wheat), this protein is Catalase (CATA).